Here is a 347-residue protein sequence, read N- to C-terminus: Dihydroorotate dehydrogenase (quinone) (347 aa).

Residues 61 to 65 and Thr-85 each bind FMN; that span reads AGLDK. Lys-65 is a substrate binding site. 110–114 provides a ligand contact to substrate; sequence NRMGF. Residues Asn-138 and Asn-171 each coordinate FMN. Residue Asn-171 coordinates substrate. Ser-174 serves as the catalytic Nucleophile. Asn-176 is a binding site for substrate. FMN contacts are provided by Lys-216 and Thr-244. Residue 245–246 participates in substrate binding; it reads NT. Residues Gly-267, Gly-296, and 317–318 each bind FMN; that span reads YT.

This sequence belongs to the dihydroorotate dehydrogenase family. Type 2 subfamily. In terms of assembly, monomer. FMN is required as a cofactor.

Its subcellular location is the cell membrane. It catalyses the reaction (S)-dihydroorotate + a quinone = orotate + a quinol. The protein operates within pyrimidine metabolism; UMP biosynthesis via de novo pathway; orotate from (S)-dihydroorotate (quinone route): step 1/1. Catalyzes the conversion of dihydroorotate to orotate with quinone as electron acceptor. The polypeptide is Dihydroorotate dehydrogenase (quinone) (Azotobacter vinelandii (strain DJ / ATCC BAA-1303)).